The chain runs to 250 residues: Flavin-dependent thymidylate synthase (250 aa).

Residues 7 to 233 (LRVQLIAKTE…PQVFSDFEIV (227 aa)) enclose the ThyX domain. Residues S71, 95-97 (RHR), and Q103 contribute to the FAD site. Residues 92–95 (ELIR), 103–107 (QLSQR), and R172 each bind dUMP. Positions 95–105 (RHRHFSYSQLS) match the ThyX motif motif. Residues 188–190 (NYR) and H194 each bind FAD. Position 199 (R199) interacts with dUMP. Catalysis depends on R199, which acts as the Involved in ionization of N3 of dUMP, leading to its activation.

It belongs to the thymidylate synthase ThyX family. In terms of assembly, homotetramer. Requires FAD as cofactor.

The enzyme catalyses dUMP + (6R)-5,10-methylene-5,6,7,8-tetrahydrofolate + NADPH + H(+) = dTMP + (6S)-5,6,7,8-tetrahydrofolate + NADP(+). It participates in pyrimidine metabolism; dTTP biosynthesis. Catalyzes the reductive methylation of 2'-deoxyuridine-5'-monophosphate (dUMP) to 2'-deoxythymidine-5'-monophosphate (dTMP) while utilizing 5,10-methylenetetrahydrofolate (mTHF) as the methyl donor, and NADPH and FADH(2) as the reductant. This chain is Flavin-dependent thymidylate synthase, found in Mycolicibacterium vanbaalenii (strain DSM 7251 / JCM 13017 / BCRC 16820 / KCTC 9966 / NRRL B-24157 / PYR-1) (Mycobacterium vanbaalenii).